The primary structure comprises 226 residues: Cytidylate kinase (226 aa).

10–18 (GPASSGKST) provides a ligand contact to ATP.

The protein belongs to the cytidylate kinase family. Type 1 subfamily.

The protein localises to the cytoplasm. It catalyses the reaction CMP + ATP = CDP + ADP. The catalysed reaction is dCMP + ATP = dCDP + ADP. This Streptococcus thermophilus (strain ATCC BAA-491 / LMD-9) protein is Cytidylate kinase.